Reading from the N-terminus, the 208-residue chain is Small ribosomal subunit protein eS8 (208 aa).

Positions 1–33 are disordered; the sequence is MGISRDHWHKRRATGGKRKPIRKKRKFELGRPA. Basic residues predominate over residues 7 to 26; that stretch reads HWHKRRATGGKRKPIRKKRK.

The protein belongs to the eukaryotic ribosomal protein eS8 family.

The protein is Small ribosomal subunit protein eS8 (RpS8) of Apis mellifera (Honeybee).